The following is a 181-amino-acid chain: MSRVAKSSITIPTSVEVIITGNLMSVKGRLGQLNMSIHPCVAIMNTNSKLSFDIITIEKKEQRKAWAQAGTARANTANLIQGVTEGWKKKLTLIGVGYRAKVMGKILDLTLGFSHPINYKFPEGIIVETPSQTEIIIKGMDKQKVGQVASEIRSYRPPEPYKGKGVRYIDEQVIHKETKKK.

It belongs to the universal ribosomal protein uL6 family. Part of the 50S ribosomal subunit.

This protein binds to the 23S rRNA, and is important in its secondary structure. It is located near the subunit interface in the base of the L7/L12 stalk, and near the tRNA binding site of the peptidyltransferase center. This Vesicomyosocius okutanii subsp. Calyptogena okutanii (strain HA) protein is Large ribosomal subunit protein uL6.